We begin with the raw amino-acid sequence, 600 residues long: Baculoviral IAP repeat-containing protein 3 (600 aa).

The stretch at 27-94 is one BIR 1 repeat; the sequence is ELYRLSTYSA…RKLYPSCNFV (68 aa). Ser138 carries the post-translational modification Phosphoserine. BIR repeat units lie at residues 167-233 and 253-320; these read EKAR…CPFL and HAAR…CEYL. Residues Cys290, Cys293, His310, and Cys317 each coordinate Zn(2+). The CARD domain occupies 436-525; sequence EESDDLALIR…ALYRDIFVQQ (90 aa). The segment at 553–588 adopts an RING-type zinc-finger fold; sequence CKVCMDREVSIVFIPCGHLVVCKDCAPSLRKCPICR.

Belongs to the IAP family. In terms of assembly, interacts with PRSS25; the interaction inhibits apoptotic suppressor activity. The BIR motifs region interacts with TNF receptor associated factors 1 and 2 (TRAF1 and TRAF2) to form a heteromeric complex, which is then recruited to the tumor necrosis factor receptor 2 (TNFR2). Interaction with TRAF2 is required for ubiquitination of IKBKE, degradation of NFKBIA and activation of NF-kappa-B. Interacts with RIP1, RIP2, RIP3, RIP4 and USP19. In terms of processing, auto-ubiquitinated and degraded by the proteasome in apoptotic cells.

It is found in the cytoplasm. The protein localises to the nucleus. It carries out the reaction S-ubiquitinyl-[E2 ubiquitin-conjugating enzyme]-L-cysteine + [acceptor protein]-L-lysine = [E2 ubiquitin-conjugating enzyme]-L-cysteine + N(6)-ubiquitinyl-[acceptor protein]-L-lysine.. Its activity is regulated as follows. USP19 regulates the stability of BIRC3/c-IAP2 by preventing its ubiquitination. Functionally, multi-functional protein which regulates not only caspases and apoptosis, but also modulates inflammatory signaling and immunity, mitogenic kinase signaling and cell proliferation, as well as cell invasion and metastasis. Acts as an E3 ubiquitin-protein ligase regulating NF-kappa-B signaling and regulates both canonical and non-canonical NF-kappa-B signaling by acting in opposite directions: acts as a positive regulator of the canonical pathway and suppresses constitutive activation of non-canonical NF-kappa-B signaling. The target proteins for its E3 ubiquitin-protein ligase activity include: RIPK1, RIPK2, RIPK3, RIPK4, CASP3, CASP7, CASP8, IKBKE, TRAF1, and BCL10. Acts as an important regulator of innate immune signaling via regulation of Toll-like receptors (TLRs), Nodlike receptors (NLRs) and RIG-I like receptors (RLRs), collectively referred to as pattern recognition receptors (PRRs). Protects cells from spontaneous formation of the ripoptosome, a large multi-protein complex that has the capability to kill cancer cells in a caspase-dependent and caspase-independent manner. Suppresses ripoptosome formation by ubiquitinating RIPK1 and CASP8. This is Baculoviral IAP repeat-containing protein 3 (Birc3) from Mus musculus (Mouse).